Consider the following 626-residue polypeptide: Polygalacturonase 1 beta-like protein 3 (626 aa).

The first 23 residues, 1-23 (MLKQFLLLQSFSFFLFNVVIVGG), serve as a signal peptide directing secretion. An FXXY 1 repeat occupies 117-120 (FSVY). The N-linked (GlcNAc...) asparagine glycan is linked to Asn124. FXXY repeat units lie at residues 125 to 128 (FTNY), 139 to 142 (FKNY), 153 to 156 (FRRY), 167 to 170 (FTVY), 181 to 184 (FNSY), 195 to 198 (FTNY), 209 to 212 (FTAY), 223 to 226 (FKTY), 238 to 241 (FTSY), 252 to 255 (FTSY), and 266 to 269 (FSNY). Asn141 carries an N-linked (GlcNAc...) asparagine glycan. Asn277 is a glycosylation site (N-linked (GlcNAc...) asparagine). FXXY repeat units follow at residues 280–283 (FTSY), 294–297 (FNNY), 308–311 (FANY), 322–325 (FSSY), 336–339 (FVNY), 350–353 (FTGY), and 364–367 (FKTY). N-linked (GlcNAc...) asparagine glycosylation is present at Asn370. FXXY repeat units follow at residues 373–376 (FKDY) and 383–386 (FAKY). 2 N-linked (GlcNAc...) asparagine glycosylation sites follow: Asn387 and Asn465. In terms of domain architecture, BURP spans 411–625 (FFRESSLKEG…FENDMNWAIA (215 aa)).

As to expression, expressed in flowers and stems. Detected in trichomes, guard cells, root vascular tissue, root hairs, pollen sacs, sepals and styles of pistils.

It localises to the secreted. The protein resides in the extracellular space. The protein localises to the apoplast. It is found in the cell wall. Functionally, involved in cell size determination. May serve as a chaperone for expansins through the secretory pathway. The polypeptide is Polygalacturonase 1 beta-like protein 3 (Arabidopsis thaliana (Mouse-ear cress)).